Here is a 715-residue protein sequence, read N- to C-terminus: Metastasis-associated protein MTA1 (715 aa).

In terms of domain architecture, BAH spans 1–164 (MAANMYRVGD…PQQKTLLADK (164 aa)). One can recognise an ELM2 domain in the interval 165–276 (GEIRVGNRYQ…KAISALVPQG (112 aa)). K182 is covalently cross-linked (Glycyl lysine isopeptide (Lys-Gly) (interchain with G-Cter in ubiquitin)). Residues 283-335 (DEMEEWSASEANLFEEALEKYGKDFTDIQQDFLPWKSLTSIIEYYYMWKTTDR) form the SANT domain. S386 carries the phosphoserine modification. Residues 393-420 (CESCYTTQSYQWYSWGPPNMQCRLCASC) form a GATA-type; atypical zinc finger. The disordered stretch occupies residues 437–460 (DGERPGPNRNNMSPHGIPARSSGS). Residue S449 is modified to Phosphoserine. A Glycyl lysine isopeptide (Lys-Gly) (interchain with G-Cter in SUMO2 and SUMO3) cross-link involves residue K509. Residue S522 is modified to Phosphoserine. Basic and acidic residues predominate over residues 542 to 552 (ETHPRPPKPDP). The tract at residues 542-590 (ETHPRPPKPDPVKSSSSVLSSLTPAKSAPVINNGSPTILGKRSYEQHNG) is disordered. The SH3-binding signature appears at 545–552 (PRPPKPDP). K549 is covalently cross-linked (Glycyl lysine isopeptide (Lys-Gly) (interchain with G-Cter in SUMO2)). Residues 553-565 (VKSSSSVLSSLTP) are compositionally biased toward low complexity. A Phosphothreonine modification is found at T564. Position 576 is a phosphoserine (S576). Residue T578 is modified to Phosphothreonine. K626 is subject to N6-acetyllysine; alternate. K626 participates in a covalent cross-link: Glycyl lysine isopeptide (Lys-Gly) (interchain with G-Cter in ubiquitin); alternate. S639 bears the Phosphoserine mark. Residues 656–686 (DVFYMATEETRKIRKLLSSSETKRAARRPYK) are interaction with RBBP4. Residues 673-715 (SSSETKRAARRPYKPIALRQSQALPLRPPPPAPVNDEPIVIED) are disordered. An SH3-binding motif is present at residues 696-705 (LPLRPPPPAP). An SUMO interaction motif 1 (SIM); crucial for efficient sumoylation motif is present at residues 711–715 (IVIED).

This sequence belongs to the metastasis-associated protein family. Component of the nucleosome remodeling and deacetylase (NuRD) repressor complex, composed of core proteins MTA1, MTA2, MTA3, RBBP4, RBBP7, HDAC1, HDAC2, MBD2, MBD3, and peripherally associated proteins CDK2AP1, CDK2AP2, GATAD2A, GATAD2B, CHD3, CHD4 and CHD5. The exact stoichiometry of the NuRD complex is unknown, and some subunits such as MBD2 and MBD3, GATAD2A and GATAD2B, and CHD3, CHD4 and CHD5 define mutually exclusive NuRD complexes. Interacts with RBBP4; the interaction is direct. Interacts with BMAL1. Interacts with CLOCK. Interacts with COP1. Interacts with CSNK1G2 in the cytoplasm. Interacts with EP300. Interacts with HDAC2. Interacts with ITGB3BP/CENPR. Interacts with MBD3L2. Interacts with MDM2. Interacts with NACC2. Interacts with p53/TP53. Interacts with PIAS1. Interacts with PIAS3. Interacts with PIAS4. Interacts with PWWP2A. Interacts with PWWP2B. Interacts with SENP1. Interacts with SENP2. Interacts with SIX3; facilitates the binding of SIX3 to the core DNA motif of SIX3 promoter. Interacts with SUMO1. Interacts with SUMO2. Interacts with TFCP2L1; which is indispensable for TFCP2L1-mediated self-renewal-promoting effect and endoderm-inhibiting action. Interacts with TFAP2C. Interacts with TPR. Interacts with UBE2I/UBC9. Post-translationally, phosphorylation by CSNK1G2/CK1 triggered by estrogen enhances corepression of estrogen receptor (ER). In terms of processing, acetylation is essential for its transcriptional coactivator activity. Sumoylation positively regulates its transcriptional corepressor activity but does not affect the protein stability. Sumoylated preferentially by SUMO2 or SUMO3 than SUMO1. Sumoylation is enhanced by PIAS1/3/4 and preferentially sumoylated by SUMO2 in the presence of PIAS1/3/4. Desumoylated by SENP1. Post-translationally, ubiquitinated by COP1, which leads to proteasomal degradation. As to expression, widely expressed but not in skeletal muscle. Highly expressed in the brain, liver, kidney and cardiac muscle and in mammary tumors.

The protein resides in the nucleus. It localises to the nucleus envelope. The protein localises to the cytoplasm. Its subcellular location is the cytoskeleton. Transcriptional coregulator which can act as both a transcriptional corepressor and coactivator. Acts as a component of the histone deacetylase NuRD complex which participates in the remodeling of chromatin. In the NuRD complex, regulates transcription of its targets by modifying the acetylation status of the target chromatin and cofactor accessibility to the target DNA. In conjunction with other components of NuRD, acts as a transcriptional corepressor of BRCA1, ESR1, TFF1 and CDKN1A. Acts as a transcriptional coactivator of BCAS3, PAX5 and SUMO2, independent of the NuRD complex. Stimulates the expression of WNT1 by inhibiting the expression of its transcriptional corepressor SIX3. Regulates p53-dependent and -independent DNA repair processes following genotoxic stress. Regulates the stability and function of p53/TP53 by inhibiting its ubiquitination by COP1 and MDM2 thereby regulating the p53-dependent DNA repair. Plays a role in the regulation of the circadian clock and is essential for the generation and maintenance of circadian rhythms under constant light and for normal entrainment of behavior to light-dark (LD) cycles. Positively regulates the CLOCK-BMAL1 heterodimer mediated transcriptional activation of its own transcription and the transcription of CRY1. Regulates deacetylation of BMAL1 by regulating SIRT1 expression, resulting in derepressing CRY1-mediated transcription repression. With Tfcp2l1, promotes establishment and maintenance of pluripotency in embryonic stem cells (ESCs) and inhibits endoderm differentiation. In Mus musculus (Mouse), this protein is Metastasis-associated protein MTA1 (Mta1).